The primary structure comprises 372 residues: tRNA 2-selenouridine synthase (372 aa).

A Rhodanese domain is found at 19-142 (LASGHPIMDV…MRQYLIDTID (124 aa)). The S-selanylcysteine intermediate role is filled by Cys102.

The protein belongs to the SelU family. As to quaternary structure, monomer.

The enzyme catalyses 5-methylaminomethyl-2-thiouridine(34) in tRNA + selenophosphate + (2E)-geranyl diphosphate + H2O + H(+) = 5-methylaminomethyl-2-selenouridine(34) in tRNA + (2E)-thiogeraniol + phosphate + diphosphate. The catalysed reaction is 5-methylaminomethyl-2-thiouridine(34) in tRNA + (2E)-geranyl diphosphate = 5-methylaminomethyl-S-(2E)-geranyl-thiouridine(34) in tRNA + diphosphate. It carries out the reaction 5-methylaminomethyl-S-(2E)-geranyl-thiouridine(34) in tRNA + selenophosphate + H(+) = 5-methylaminomethyl-2-(Se-phospho)selenouridine(34) in tRNA + (2E)-thiogeraniol. It catalyses the reaction 5-methylaminomethyl-2-(Se-phospho)selenouridine(34) in tRNA + H2O = 5-methylaminomethyl-2-selenouridine(34) in tRNA + phosphate. Involved in the post-transcriptional modification of the uridine at the wobble position (U34) of tRNA(Lys), tRNA(Glu) and tRNA(Gln). Catalyzes the conversion of 2-thiouridine (S2U-RNA) to 2-selenouridine (Se2U-RNA). Acts in a two-step process involving geranylation of 2-thiouridine (S2U) to S-geranyl-2-thiouridine (geS2U) and subsequent selenation of the latter derivative to 2-selenouridine (Se2U) in the tRNA chain. In Shewanella loihica (strain ATCC BAA-1088 / PV-4), this protein is tRNA 2-selenouridine synthase.